The following is a 185-amino-acid chain: Protein GrpE (185 aa).

The interval 1-37 (MSEEKQTPEQEAEVEAQEEAVQADTEEVTQDEQSAFQ) is disordered.

This sequence belongs to the GrpE family. As to quaternary structure, homodimer.

It localises to the cytoplasm. Its function is as follows. Participates actively in the response to hyperosmotic and heat shock by preventing the aggregation of stress-denatured proteins, in association with DnaK and GrpE. It is the nucleotide exchange factor for DnaK and may function as a thermosensor. Unfolded proteins bind initially to DnaJ; upon interaction with the DnaJ-bound protein, DnaK hydrolyzes its bound ATP, resulting in the formation of a stable complex. GrpE releases ADP from DnaK; ATP binding to DnaK triggers the release of the substrate protein, thus completing the reaction cycle. Several rounds of ATP-dependent interactions between DnaJ, DnaK and GrpE are required for fully efficient folding. This Bacillus pumilus (strain SAFR-032) protein is Protein GrpE.